A 77-amino-acid chain; its full sequence is MAVGVSPGELRELTDEELAERLRESKEELFNLRFQMATGQLNNNRRLRTVRQEIARIYTVLRERELGLATGPDGKES.

Belongs to the universal ribosomal protein uL29 family.

The protein is Large ribosomal subunit protein uL29 (rpmC) of Mycobacterium bovis (strain ATCC BAA-935 / AF2122/97).